Consider the following 197-residue polypeptide: FMN-dependent NADH:quinone oxidoreductase (197 aa).

Position 10 (Ser-10) interacts with FMN.

Belongs to the azoreductase type 1 family. In terms of assembly, homodimer. It depends on FMN as a cofactor.

It carries out the reaction 2 a quinone + NADH + H(+) = 2 a 1,4-benzosemiquinone + NAD(+). It catalyses the reaction N,N-dimethyl-1,4-phenylenediamine + anthranilate + 2 NAD(+) = 2-(4-dimethylaminophenyl)diazenylbenzoate + 2 NADH + 2 H(+). Quinone reductase that provides resistance to thiol-specific stress caused by electrophilic quinones. Functionally, also exhibits azoreductase activity. Catalyzes the reductive cleavage of the azo bond in aromatic azo compounds to the corresponding amines. This is FMN-dependent NADH:quinone oxidoreductase from Mycoplasma genitalium (strain ATCC 33530 / DSM 19775 / NCTC 10195 / G37) (Mycoplasmoides genitalium).